A 646-amino-acid chain; its full sequence is MLRIPSRIGSRQVLACAGRNLKCGSVMRHISRRNISKEPEKVYTNLADVNDPKRDQFFKYTWGTWLQNDKLEKDKRTTKFSLNGLNSVLDDIYRQATKNTKDNFKSETEIVPQPLTNKNRTVSMPNNIAITKLGTLNPNEKSVTIKTIASVHEGKHHRIYKVQTNLSDEKSFVLRIPYQLDDDKATISHRIRSEVATLDFLDLQLKMKVPKVICYAADDGNPLGVPFILQEYIDGSLLMKDWNPLMDDKALMVETGEGSTENPELASLNKVVKSMADFHAKLNSISFNAAGSIYFKNDSNLNSETVIDNISNDLASNLKDRWVLGPSVERRLWKKKSDLAIEERLKYLGPWKEDKETSISAQILRDTAILELKNAEARLAKSEQNGSKDKNTETLIKKQIETFQNVEKISGDLISSEMKAIPNIKDLLKPTIFHPDLDPMNVLIENKTETPFMLDLEGAVVKPFILQSSPQFVAYDGPKIYNMKSDIPEFEKLSEEERKHYEFMYKRTRNQFLWEKAVNERLPNLIMTVAPPVKVLRRPYTAVLEQKTDNDYILVDDSFFQLREAWAFFFKNGLVTKEEFPLTFTDEQVKQHADDLNSLHEKLVSTPFAATQGWVPQDMFDNLVRAGVIIKDSTGNFTVNDINPSA.

Residues 1–34 (MLRIPSRIGSRQVLACAGRNLKCGSVMRHISRRN) constitute a mitochondrion transit peptide.

Belongs to the AIM9 family.

Its subcellular location is the mitochondrion. The sequence is that of Altered inheritance of mitochondria protein 9, mitochondrial (AIM9) from Candida glabrata (strain ATCC 2001 / BCRC 20586 / JCM 3761 / NBRC 0622 / NRRL Y-65 / CBS 138) (Yeast).